Here is a 437-residue protein sequence, read N- to C-terminus: Keratin, type I cytoskeletal 13 (437 aa).

The segment at 1–95 (MSCRFQSSSM…GVDGGLLSGN (95 aa)) is head. Omega-N-methylarginine occurs at positions 27 and 35. The tract at residues 96 to 131 (EKITMQNLNDRLASYLDKVRALEAANADLEVKIRDW) is coil 1A. An IF rod domain is found at 96-408 (EKITMQNLND…SLLEGQDAKM (313 aa)). Residues 132–150 (HLKQSPASPERDYSAYYKT) are linker 1. Residues 151 to 242 (IEELRIKILE…KNHEEEMKEF (92 aa)) form a coil 1B region. Residues 243–265 (SNQVVGQVNVEMDATPGIDLTRV) form a linker 12 region. A coil 2 region spans residues 266-404 (LAEMREQYEA…ATYRSLLEGQ (139 aa)). The segment at 405–437 (DAKMTGFNSGGNNTTTSNGSPSSNSGRPDFRKY) is tail. The interval 408 to 437 (MTGFNSGGNNTTTSNGSPSSNSGRPDFRKY) is disordered. Low complexity predominate over residues 409–430 (TGFNSGGNNTTTSNGSPSSNSG).

It belongs to the intermediate filament family. In terms of assembly, heterotetramer of two type I and two type II keratins. O-glycosylated; glycans consist of single N-acetylglucosamine residues. Expressed in tongue epithelia (at protein level). Expressed in upper suprabasal layers of the corneal epithelium (at protein level).

Its function is as follows. Type 1 keratin. Maintains postnatal tongue mucosal cell homeostasis and tissue organization in response to mechanical stress, potentially via regulation of the G1/S phase cyclins CCNE1 and CCNE2. The protein is Keratin, type I cytoskeletal 13 (Krt13) of Mus musculus (Mouse).